The chain runs to 414 residues: Arginine deiminase (414 aa).

The active-site Amidino-cysteine intermediate is Cys-402.

It belongs to the arginine deiminase family.

Its subcellular location is the cytoplasm. The catalysed reaction is L-arginine + H2O = L-citrulline + NH4(+). Its pathway is amino-acid degradation; L-arginine degradation via ADI pathway; carbamoyl phosphate from L-arginine: step 1/2. In Oenococcus oeni (strain ATCC BAA-331 / PSU-1), this protein is Arginine deiminase.